Consider the following 82-residue polypeptide: Putative defensin-like protein 48 (82 aa).

The signal sequence occupies residues 1–28 (MGIKTLIIFFHIFILAVLSSNNIILTSG). Cystine bridges form between Cys39/Cys80, Cys43/Cys67, Cys53/Cys78, and Cys57/Cys79.

The protein belongs to the DEFL family.

It is found in the secreted. This chain is Putative defensin-like protein 48, found in Arabidopsis thaliana (Mouse-ear cress).